A 231-amino-acid polypeptide reads, in one-letter code: Glycerol-3-phosphate acyltransferase (231 aa).

Transmembrane regions (helical) follow at residues 6–26, 55–75, 95–115, 130–150, 152–172, and 196–216; these read FLFLFLFFYILGSIPTGLVIG, WGILVFLLDFCKGFVPLTIFL, LTMKISLLAISPILGHMFSLF, IITSFNPLIGISGIIFFAIFL, LFGYASLSSIMASTLVNIFLW, and LFYFSINFATLIIIAKHYSNI.

This sequence belongs to the PlsY family. In terms of assembly, probably interacts with PlsX.

It is found in the cell membrane. The catalysed reaction is an acyl phosphate + sn-glycerol 3-phosphate = a 1-acyl-sn-glycero-3-phosphate + phosphate. The protein operates within lipid metabolism; phospholipid metabolism. Its function is as follows. Catalyzes the transfer of an acyl group from acyl-phosphate (acyl-PO(4)) to glycerol-3-phosphate (G3P) to form lysophosphatidic acid (LPA). This enzyme utilizes acyl-phosphate as fatty acyl donor, but not acyl-CoA or acyl-ACP. This chain is Glycerol-3-phosphate acyltransferase, found in Aster yellows witches'-broom phytoplasma (strain AYWB).